The sequence spans 371 residues: DNA repair protein RAD14 (371 aa).

The segment at 26-48 (LSSDQLNRIESRNEPLKTRPLAV) is disordered. Residues 32-42 (NRIESRNEPLK) show a composition bias toward basic and acidic residues. Residues Cys191, Cys194, Cys213, and Cys216 each coordinate Zn(2+). Residues 191 to 216 (CIECHINIEMDPVLHDVFKLQVCKQC) fold into a zinc finger.

This sequence belongs to the XPA family. In terms of assembly, two monomers bind to kinked/damaged DNA (construct with only the C-terminal DNA-binding domain). Component of the nucleotide excision repair factor 1 (NEF1) complex consisting of RAD1, RAD10 and RAD14.

The protein resides in the nucleus. In terms of biological role, involved in nucleotide excision repair. Binds specifically to damaged DNA. Required for the incision step. The sequence is that of DNA repair protein RAD14 (RAD14) from Saccharomyces cerevisiae (strain ATCC 204508 / S288c) (Baker's yeast).